The chain runs to 300 residues: Quinolinate synthase (300 aa).

2 residues coordinate iminosuccinate: histidine 23 and serine 40. Cysteine 85 serves as a coordination point for [4Fe-4S] cluster. Iminosuccinate contacts are provided by residues 111–113 and serine 128; that span reads YIN. Position 171 (cysteine 171) interacts with [4Fe-4S] cluster. Residues 198–200 and threonine 215 contribute to the iminosuccinate site; that span reads HPE. Cysteine 258 is a [4Fe-4S] cluster binding site.

The protein belongs to the quinolinate synthase family. Type 2 subfamily. [4Fe-4S] cluster serves as cofactor.

The protein resides in the cytoplasm. The enzyme catalyses iminosuccinate + dihydroxyacetone phosphate = quinolinate + phosphate + 2 H2O + H(+). It functions in the pathway cofactor biosynthesis; NAD(+) biosynthesis; quinolinate from iminoaspartate: step 1/1. Functionally, catalyzes the condensation of iminoaspartate with dihydroxyacetone phosphate to form quinolinate. In Clostridium novyi (strain NT), this protein is Quinolinate synthase.